A 378-amino-acid chain; its full sequence is tRNA-specific 2-thiouridylase MnmA (378 aa).

Residues Ala6 to Ser13 and Leu32 each bind ATP. The Nucleophile role is filled by Cys101. An intrachain disulfide couples Cys101 to Cys199. Gly125 lines the ATP pocket. An interaction with tRNA region spans residues Lys148–Gln150. Cys199 serves as the catalytic Cysteine persulfide intermediate.

The protein belongs to the MnmA/TRMU family.

Its subcellular location is the cytoplasm. It carries out the reaction S-sulfanyl-L-cysteinyl-[protein] + uridine(34) in tRNA + AH2 + ATP = 2-thiouridine(34) in tRNA + L-cysteinyl-[protein] + A + AMP + diphosphate + H(+). Its function is as follows. Catalyzes the 2-thiolation of uridine at the wobble position (U34) of tRNA, leading to the formation of s(2)U34. This chain is tRNA-specific 2-thiouridylase MnmA, found in Micrococcus luteus (strain ATCC 4698 / DSM 20030 / JCM 1464 / CCM 169 / CCUG 5858 / IAM 1056 / NBRC 3333 / NCIMB 9278 / NCTC 2665 / VKM Ac-2230) (Micrococcus lysodeikticus).